We begin with the raw amino-acid sequence, 44 residues long: Photosystem I reaction center subunit IX (44 aa).

Residues 7 to 27 (YLSVAPVVSTIWFGALAGLLI) form a helical membrane-spanning segment.

This sequence belongs to the PsaJ family.

It is found in the plastid. It localises to the chloroplast thylakoid membrane. Its function is as follows. May help in the organization of the PsaE and PsaF subunits. The chain is Photosystem I reaction center subunit IX from Cucumis sativus (Cucumber).